The sequence spans 168 residues: MVKDILAPGLRVVFCGINPGLSSANTGFPFAHPANRFWKVIHLAGFTDRQLKPEEAEKLLDFRCGVTKLVDRPTVQATEVKLHELRSGGRNLIEKIEDYQPAALAVLGKQAFEQGFSQRGIAWGKKKIAIGATMVWVLPNPSGLNRIKTEKLVEAYRELDQALIMRGL.

This sequence belongs to the uracil-DNA glycosylase (UDG) superfamily. TDG/mug family. Binds DNA as a monomer.

It localises to the cytoplasm. The enzyme catalyses Specifically hydrolyzes mismatched double-stranded DNA and polynucleotides, releasing free uracil.. Functionally, excises ethenocytosine and uracil, which can arise by alkylation or deamination of cytosine, respectively, from the corresponding mispairs with guanine in ds-DNA. It is capable of hydrolyzing the carbon-nitrogen bond between the sugar-phosphate backbone of the DNA and the mispaired base. The complementary strand guanine functions in substrate recognition. Required for DNA damage lesion repair in stationary-phase cells. This Salmonella gallinarum (strain 287/91 / NCTC 13346) protein is G/U mismatch-specific DNA glycosylase.